Reading from the N-terminus, the 493-residue chain is Transcript termination protein A18 (493 aa).

A Helicase ATP-binding domain is found at 100-256 (MIELKRPLYI…NSIINIAKLS (157 aa)). 113–120 (LACGFGKT) provides a ligand contact to ATP. The DESH box motif lies at 206–209 (DESH).

Belongs to the helicase family. Poxviruses subfamily. Interacts with G2. Might be part of a transcription complex composed at least of G2, A18, and H5.

The protein localises to the virion. DNA helicase which seems to act as a postreplicative transcription termination factor. Involved in ATP-dependent release of nascent RNA. Forms a stable complex with single-stranded DNA, and to a lesser extent RNA. This is Transcript termination protein A18 from Camelus.